The chain runs to 224 residues: Small ribosomal subunit protein uS3 (224 aa).

The 69-residue stretch at 38 to 106 (IRKFISEKLK…QVHINIVEIK (69 aa)) folds into the KH type-2 domain.

This sequence belongs to the universal ribosomal protein uS3 family. Part of the 30S ribosomal subunit. Forms a tight complex with proteins S10 and S14.

In terms of biological role, binds the lower part of the 30S subunit head. Binds mRNA in the 70S ribosome, positioning it for translation. This chain is Small ribosomal subunit protein uS3, found in Lactobacillus acidophilus (strain ATCC 700396 / NCK56 / N2 / NCFM).